The primary structure comprises 543 residues: MWKLEKKYILRQNPSVFLNGTAFWTPHPQNILHIDRNSLRETKKNASLYRTRLLNLETEQIKKAMINYELDKLMQDHVKRSSIITRDLEIIENMVEKFQDSPQLLPSPPKPLSPTTQSQPTNFKTNVYTITVAPGDPGFTVESNFKIELVSSLYTNQQQWLPSYGPWYSSLTDIAMQRRVFPKELRGTLNYQNSTSLKLMHAVLTTISSATDDFYSDVRHISDTSSALVILNAYFCLKTSAPIPVTYEELLNNLEAKLGMFVFDLKNHTGGNGFSFSPQVNEATSSIAPPNKDTKYSQHFFSSHKIYSLLEASGLLSTKSHEINPKTDVIYTITTEIFGEDIPPMASFQWNLRVGIIAIEVFVITYLLLETSQISIHSTHRRLNLSTLLGSKFKKSSTGLLNQIVYKKGQVFSFLNKNYIVPTLTHNKNVPTSFLFPGVTLIALESLATTAVDKPFINLTGNRFQDIFEIINQKFTFKDPVSLMAAQTALRFKVEHGLSNILTNLSPTTFATEIIRRQFGGEDDYDTLYFIVLGCLPIAWAAV.

The tract at residues 1-54 is interaction with major capsid protein/MCP; it reads MWKLEKKYILRQNPSVFLNGTAFWTPHPQNILHIDRNSLRETKKNASLYRTRLL. A disordered region spans residues 101 to 120; the sequence is SPQLLPSPPKPLSPTTQSQP.

Belongs to the herpesviridae CVC2 protein family. Heterodimerizes with CVC1. Interacts with major capsid protein/MCP and triplex capsid protein 1/TRX1 at the pentamer vertices. Interacts with the large tegument protein/LTP.

It is found in the virion. The protein localises to the host nucleus. In terms of biological role, capsid vertex-specific component that plays a role during viral DNA encapsidation, assuring correct genome cleavage and presumably stabilizing capsids that contain full-length viral genomes. Participates in the interaction between the capsid and the tegument through interaction with the large tegument protein/LTP. The polypeptide is Capsid vertex component 2 (Saimiri sciureus (Common squirrel monkey)).